The chain runs to 185 residues: Ribosome-recycling factor (185 aa).

The protein belongs to the RRF family.

Its subcellular location is the cytoplasm. In terms of biological role, responsible for the release of ribosomes from messenger RNA at the termination of protein biosynthesis. May increase the efficiency of translation by recycling ribosomes from one round of translation to another. This is Ribosome-recycling factor from Chloroflexus aurantiacus (strain ATCC 29364 / DSM 637 / Y-400-fl).